The following is a 435-amino-acid chain: uncharacterized protein (435 aa).

12 helical membrane passes run 14-34 (VSMA…GVGA), 44-64 (TFIL…KLGA), 84-104 (IITG…IALF), 123-143 (FNIA…NFFG), 153-173 (FIVL…LITI), 187-207 (VSGM…FGVI), 224-244 (AIFI…ISAI), 267-287 (FLGN…ISSA), 324-344 (LYIT…EGVA), 346-366 (ITSA…YILI), 375-395 (IVIF…YYQW), and 400-420 (FVFY…IIYR).

The protein localises to the cell membrane. This is an uncharacterized protein from Methanocaldococcus jannaschii (strain ATCC 43067 / DSM 2661 / JAL-1 / JCM 10045 / NBRC 100440) (Methanococcus jannaschii).